We begin with the raw amino-acid sequence, 124 residues long: Ragulator complex protein LAMTOR3 (124 aa).

The segment at 57–70 (TDQGSKLGLSKNKS) is required for interaction with LAMTOR2.

The protein belongs to the LAMTOR3 family. In terms of assembly, part of the Ragulator complex composed of LAMTOR1, LAMTOR2, LAMTOR3, LAMTOR4 and LAMTOR5. LAMTOR4 and LAMTOR5 form a heterodimer that interacts, through LAMTOR1, with a LAMTOR2, LAMTOR3 heterodimer. Interacts with LAMTOR1 and LAMTOR2; the interaction is direct. The Ragulator complex interacts with both the mTORC1 complex and heterodimers constituted of the Rag GTPases RagA/RRAGA, RagB/RRAGB, RagC/RRAGC and RagD/RRAGD; regulated by amino acid availability. The Ragulator complex interacts with SLC38A9; the probable amino acid sensor. Component of the lysosomal folliculin complex (LFC), composed of FLCN, FNIP1 (or FNIP2), RagA/RRAGA or RagB/RRAGB GDP-bound, RagC/RRAGC or RagD/RRAGD GTP-bound, and Ragulator. Interacts with MAP2K1/MEK1 and MAPK2. Interacts with MORG1.

The protein resides in the late endosome membrane. As part of the Ragulator complex it is involved in amino acid sensing and activation of mTORC1, a signaling complex promoting cell growth in response to growth factors, energy levels, and amino acids. Activated by amino acids through a mechanism involving the lysosomal V-ATPase, the Ragulator plays a dual role for the small GTPases Rag (RagA/RRAGA, RagB/RRAGB, RagC/RRAGC and/or RagD/RRAGD): it (1) acts as a guanine nucleotide exchange factor (GEF), activating the small GTPases Rag and (2) mediates recruitment of Rag GTPases to the lysosome membrane. Activated Ragulator and Rag GTPases function as a scaffold recruiting mTORC1 to lysosomes where it is in turn activated. Adapter protein that enhances the efficiency of the MAP kinase cascade facilitating the activation of MAPK2. The protein is Ragulator complex protein LAMTOR3 of Homo sapiens (Human).